The following is a 510-amino-acid chain: Myosin-binding protein C, cardiac-type (510 aa).

3 consecutive Ig-like C2-type domains span residues 177 to 269 (KKST…VKEP), 270 to 347 (PYSS…TVKT), and 378 to 438 (RDQA…SFIP).

The protein belongs to the immunoglobulin superfamily. MyBP family. In terms of tissue distribution, heart.

Its function is as follows. Thick filament-associated protein located in the crossbridge region of vertebrate striated muscle a bands. In vitro it binds MHC, F-actin and native thin filaments, and modifies the activity of actin-activated myosin ATPase. It may modulate muscle contraction or may play a more structural role. The sequence is that of Myosin-binding protein C, cardiac-type from Ambystoma mexicanum (Axolotl).